Here is a 167-residue protein sequence, read N- to C-terminus: Translationally-controlled tumor protein homolog (167 aa).

The TCTP domain maps to 1–167; it reads MIIYTDIISG…WKHGVKAEKI (167 aa).

This sequence belongs to the TCTP family.

The protein localises to the cytoplasm. It is found in the cytoskeleton. In terms of biological role, involved in protein synthesis. Involved in microtubule stabilization. This chain is Translationally-controlled tumor protein homolog, found in Kluyveromyces lactis (strain ATCC 8585 / CBS 2359 / DSM 70799 / NBRC 1267 / NRRL Y-1140 / WM37) (Yeast).